The primary structure comprises 321 residues: MNTIDNNNAAIAVNSVLSSTTDSTSSTTTSTSSISSSLLTDGRVDISKLLLEVQKLLREMVTTLQDYLQKQLAQSYDIQKAVFESQNKAIDEKKAGATAALIGGAISSVLGILGSFAAINSATKGASDVAQQAASTSAKSIGTVSEASTKALAKASEGIADAADDAAGAMQQTIATAAKAASRTSGITDDVATSAQKASQVAEEAADAAQELAQKAGLLSRFTAAAGRISGSTPFIVVTSLAEGTKTLPTTISESVKSNHDINEQRAKSVENLQASNLDTYKQDVRRAQDDISSRLRDMTTTARDLTDLINRMGQAARLAG.

Residues alanine 99 to isoleucine 119 traverse the membrane as a helical segment.

The protein belongs to the SctB/EspB family. The core secretion machinery of the T3SS is composed of approximately 20 different proteins, including cytoplasmic components, a base, an export apparatus and a needle. This subunit is involved in the formation of a pore, called the translocon, in host membrane.

It is found in the secreted. The protein localises to the cell surface. The protein resides in the host membrane. In terms of biological role, component of the type III secretion system (T3SS), also called injectisome, which is used to inject bacterial effector proteins into eukaryotic host cells. EspD and EspB are inserted into the host membrane where they form a pore and allow the translocation of effector proteins into the cytosol of target cells. Necessary for intimate attachment to epithelial cells. The protein is Type 3 secretion system translocon protein SctB of Escherichia coli O127:H6 (strain E2348/69 / EPEC).